Consider the following 121-residue polypeptide: Large ribosomal subunit protein uL14c (121 aa).

Component of the chloroplast large ribosomal subunit (LSU). Mature 70S chloroplast ribosomes of higher plants consist of a small (30S) and a large (50S) subunit. The 30S small subunit contains 1 molecule of ribosomal RNA (16S rRNA) and 24 different proteins. The 50S large subunit contains 3 rRNA molecules (23S, 5S and 4.5S rRNA) and 33 different proteins.

Its subcellular location is the plastid. It localises to the chloroplast. In terms of biological role, component of the chloroplast ribosome (chloro-ribosome), a dedicated translation machinery responsible for the synthesis of chloroplast genome-encoded proteins, including proteins of the transcription and translation machinery and components of the photosynthetic apparatus. The polypeptide is Large ribosomal subunit protein uL14c (Spinacia oleracea (Spinach)).